Consider the following 259-residue polypeptide: Leucine-rich repeat-containing protein 3B (259 aa).

Positions 1 to 33 (MNLVDLWLSRSLSMCLLLQSFVLMILCFHSASM) are cleaved as a signal peptide. The LRRNT domain occupies 34–64 (CPKGCLCSSSGGLNVTCSNANLKEIPRDLPP). Asn47 is a glycosylation site (N-linked (GlcNAc...) asparagine). LRR repeat units lie at residues 65-86 (ETVL…IFKD), 89-110 (QLRV…AFKG), and 114-135 (TLQT…AFNN). The N-linked (GlcNAc...) asparagine glycan is linked to Asn94. The LRRCT domain occupies 145 to 197 (NPWHCDCTLQQVLRSMASNHETAHNVICKTSVLDEHAGRPFLNAANDADLCNL). Residues 205–225 (AMLVTMFGWFTMVISYVVYYV) form a helical membrane-spanning segment.

It belongs to the LRRC3 family.

The protein localises to the membrane. The sequence is that of Leucine-rich repeat-containing protein 3B (Lrrc3b) from Mus musculus (Mouse).